We begin with the raw amino-acid sequence, 367 residues long: Probable cinnamyl alcohol dehydrogenase (367 aa).

C47 is a binding site for Zn(2+). T49 contributes to the NADP(+) binding site. Residues H69, E70, C100, C103, C106, C114, and C163 each contribute to the Zn(2+) site. Residues T167, 188 to 193, 211 to 216, T251, G275, and 298 to 300 each bind NADP(+); these read GLGGVG, SSSSKK, and SFI.

This sequence belongs to the zinc-containing alcohol dehydrogenase family. In terms of assembly, homodimer. Zn(2+) serves as cofactor.

It catalyses the reaction (E)-cinnamyl alcohol + NADP(+) = (E)-cinnamaldehyde + NADPH + H(+). It carries out the reaction (E)-coniferol + NADP(+) = (E)-coniferaldehyde + NADPH + H(+). The catalysed reaction is (E)-sinapyl alcohol + NADP(+) = (E)-sinapaldehyde + NADPH + H(+). The enzyme catalyses (E)-4-coumaroyl alcohol + NADP(+) = (E)-4-coumaraldehyde + NADPH + H(+). It catalyses the reaction (E)-caffeyl alcohol + NADP(+) = (E)-caffeyl aldehyde + NADPH + H(+). Its pathway is aromatic compound metabolism; phenylpropanoid biosynthesis. In terms of biological role, involved in lignin biosynthesis. May catalyze the final step specific for the production of lignin monomers, like coniferyl alcohol, sinapyl alcohol and 4-coumaryl alcohol. This Zea mays (Maize) protein is Probable cinnamyl alcohol dehydrogenase.